The sequence spans 653 residues: Endoglin (653 aa).

The N-terminal stretch at 1–26 (MDRGVLPLPITLLFVIYSFVPTTGLA) is a signal peptide. Residues 27–47 (ERVGCDLQPVDPTRGEVTFTT) are OR1, N-terminal part. Positions 27 to 337 (ERVGCDLQPV…SSCGGVFQTT (311 aa)) are required for interaction with GDF2. The Extracellular portion of the chain corresponds to 27 to 581 (ERVGCDLQPV…IVSPDLSGKG (555 aa)). 7 disulfide bridges follow: Cys31–Cys209, Cys54–Cys184, Cys244–Cys330, Cys350–Cys382, Cys363–Cys442, Cys394–Cys412, and Cys493–Cys549. Residues 48–201 (SQVSEGCVAQ…MGATLEWQPR (154 aa)) form an OR2 region. Asn89, Asn135, and Asn266 each carry an N-linked (GlcNAc...) asparagine glycan. An OR1, C-terminal part region spans residues 202-330 (AQTPVQSCRL…SNVSLRASSC (129 aa)). Residues 270 to 282 (QILTTGEYSVKIF) are essential for interaction with GDF2. Residues Asn307 and Asn322 are each glycosylated (N-linked (GlcNAc...) asparagine). The region spanning 363-510 (CGNQVMTLAL…GDMVELIQSR (148 aa)) is the ZP domain. Residues 582-606 (LVLPSVLGITFGAFLIGALLTAALW) traverse the membrane as a helical segment. At 607 to 653 (YIYSHTRGPSKREPVVAVAAPASSESSSTNHSIGSTQSTPCSTSSMA) the chain is on the cytoplasmic side. The segment covering 624-634 (VAAPASSESSS) has biased composition (low complexity). Residues 624 to 653 (VAAPASSESSSTNHSIGSTQSTPCSTSSMA) are disordered. The span at 635–653 (TNHSIGSTQSTPCSTSSMA) shows a compositional bias: polar residues. Phosphoserine; by TGFBR1 is present on residues Ser641 and Ser644.

Homodimer; disulfide-linked. Forms a heteromeric complex with the signaling receptors for transforming growth factor-beta: TGFBR1 and/or TGFBR2. Interacts with TGFB1. It is able to bind TGFB1 and TGFB2 with high affinity, but not TGFB3. Interacts with GDF2, forming a heterotetramer with a 2:2 stoichiometry. Interacts with ACVRL1. Can form a heteromeric complex with GDF2 and ACVRL1. Interacts with BMP10. Interacts with DYNLT4. Interacts with ARRB2. Detected on blood vessels (at protein level). Detected on adult pulmonary artery, capillaries supporting the heart muscle and lung alveolar capillary endothelial cells. Endoglin is restricted to endothelial cells in all tissues except bone marrow and is also found in stromal cells within the connective tissue of intestine, stomach, heart, skeletal muscle, uterus, ovary, oviduct, testis and thymus.

Its subcellular location is the cell membrane. Its function is as follows. Vascular endothelium glycoprotein that plays an important role in the regulation of angiogenesis. Required for normal structure and integrity of adult vasculature. Regulates the migration of vascular endothelial cells. Required for normal extraembryonic angiogenesis and for embryonic heart development. May regulate endothelial cell shape changes in response to blood flow, which drive vascular remodeling and establishment of normal vascular morphology during angiogenesis. May play a role in the binding of endothelial cells to integrins. Acts as a TGF-beta coreceptor and is involved in the TGF-beta/BMP signaling cascade that ultimately leads to the activation of SMAD transcription factors. Required for GDF2/BMP9 signaling through SMAD1 in endothelial cells and modulates TGFB1 signaling through SMAD3. The polypeptide is Endoglin (Eng) (Mus musculus (Mouse)).